A 243-amino-acid chain; its full sequence is Carboxy-S-adenosyl-L-methionine synthase (243 aa).

Residues Tyr40, 65–67, 90–91, 118–119, Asn133, and Arg200 each bind S-adenosyl-L-methionine; these read GCS, DN, and DI.

This sequence belongs to the class I-like SAM-binding methyltransferase superfamily. Cx-SAM synthase family. Homodimer.

The catalysed reaction is prephenate + S-adenosyl-L-methionine = carboxy-S-adenosyl-L-methionine + 3-phenylpyruvate + H2O. Catalyzes the conversion of S-adenosyl-L-methionine (SAM) to carboxy-S-adenosyl-L-methionine (Cx-SAM). This Shewanella pealeana (strain ATCC 700345 / ANG-SQ1) protein is Carboxy-S-adenosyl-L-methionine synthase.